Consider the following 61-residue polypeptide: Beta-defensin 133 (61 aa).

The signal sequence occupies residues 1-23 (MKIHVFLFVLFFFLVPIATRVKC). 2 disulfides stabilise this stretch: Cys-31-Cys-59 and Cys-38-Cys-52.

It belongs to the beta-defensin family.

Its subcellular location is the secreted. Has antibacterial activity. This chain is Beta-defensin 133 (DEFB133), found in Homo sapiens (Human).